The sequence spans 280 residues: 2,3,4,5-tetrahydropyridine-2,6-dicarboxylate N-succinyltransferase (280 aa).

Residues R109 and D146 each contribute to the substrate site.

The protein belongs to the transferase hexapeptide repeat family. Homotrimer.

It localises to the cytoplasm. It catalyses the reaction (S)-2,3,4,5-tetrahydrodipicolinate + succinyl-CoA + H2O = (S)-2-succinylamino-6-oxoheptanedioate + CoA. It participates in amino-acid biosynthesis; L-lysine biosynthesis via DAP pathway; LL-2,6-diaminopimelate from (S)-tetrahydrodipicolinate (succinylase route): step 1/3. This is 2,3,4,5-tetrahydropyridine-2,6-dicarboxylate N-succinyltransferase from Blochmanniella floridana.